The following is a 156-amino-acid chain: Putative type II restriction enzyme ApeKORF2002P (156 aa).

The protein to M.jannaschii MJ1199.

It carries out the reaction Endonucleolytic cleavage of DNA to give specific double-stranded fragments with terminal 5'-phosphates.. Its function is as follows. A putative type II restriction enzyme, its methylase would be APE_2002. In Aeropyrum pernix (strain ATCC 700893 / DSM 11879 / JCM 9820 / NBRC 100138 / K1), this protein is Putative type II restriction enzyme ApeKORF2002P.